The sequence spans 124 residues: MKYNATKAISIAPPTIPTVNPTINEVFSFELLELELEEEEDKLLSCESDCFAQYVDGHLSHVNEVITQYSPEAQTGHDAVESQTTHPSLPLVAEVEEVAVLDKDELAEALEELDIFCLIFRKRT.

This is an uncharacterized protein from Saccharomyces cerevisiae (strain ATCC 204508 / S288c) (Baker's yeast).